The chain runs to 428 residues: 5'-deoxyadenosine deaminase (428 aa).

The Zn(2+) site is built by histidine 59 and histidine 61. The substrate site is built by glutamate 88 and histidine 180. Position 207 (histidine 207) interacts with Zn(2+). Substrate contacts are provided by glutamate 210 and aspartate 296. Residue aspartate 296 coordinates Zn(2+).

The protein belongs to the metallo-dependent hydrolases superfamily. MTA/SAH deaminase family. Homotetramer. Zn(2+) is required as a cofactor.

It carries out the reaction 5'-deoxyadenosine + H2O + H(+) = 5'-deoxyinosine + NH4(+). The catalysed reaction is S-adenosyl-L-homocysteine + H2O + H(+) = S-inosyl-L-homocysteine + NH4(+). It catalyses the reaction S-methyl-5'-thioadenosine + H2O + H(+) = S-methyl-5'-thioinosine + NH4(+). The enzyme catalyses adenosine + H2O + H(+) = inosine + NH4(+). Its pathway is amino-acid biosynthesis; S-adenosyl-L-methionine biosynthesis. Catalyzes the deamination of three SAM-derived enzymatic products, namely 5'-deoxyadenosine, S-adenosyl-L-homocysteine, and 5'-methylthioadenosine, to produce the inosine analogs. Can also deaminate adenosine. The preferred substrate for this enzyme is 5'-deoxyadenosine, but all these substrates are efficiently deaminated. Likely functions in a S-adenosyl-L-methionine (SAM) recycling pathway from S-adenosyl-L-homocysteine (SAH) produced from SAM-dependent methylation reactions. May also be involved in the recycling of 5'-deoxyadenosine, whereupon the 5'-deoxyribose moiety of 5'-deoxyinosine is further metabolized to deoxyhexoses used for the biosynthesis of aromatic amino acids in methanogens. The protein is 5'-deoxyadenosine deaminase of Methanococcus aeolicus (strain ATCC BAA-1280 / DSM 17508 / OCM 812 / Nankai-3).